The sequence spans 116 residues: Iron-sulfur cluster insertion protein ErpA (116 aa).

The iron-sulfur cluster site is built by Cys-44, Cys-108, and Cys-110.

The protein belongs to the HesB/IscA family. Homodimer. It depends on iron-sulfur cluster as a cofactor.

Functionally, required for insertion of 4Fe-4S clusters for at least IspG. The polypeptide is Iron-sulfur cluster insertion protein ErpA (Aeromonas salmonicida (strain A449)).